We begin with the raw amino-acid sequence, 244 residues long: 5-oxoprolinase subunit A (244 aa).

Belongs to the LamB/PxpA family. In terms of assembly, forms a complex composed of PxpA, PxpB and PxpC.

The enzyme catalyses 5-oxo-L-proline + ATP + 2 H2O = L-glutamate + ADP + phosphate + H(+). In terms of biological role, catalyzes the cleavage of 5-oxoproline to form L-glutamate coupled to the hydrolysis of ATP to ADP and inorganic phosphate. The sequence is that of 5-oxoprolinase subunit A from Escherichia coli O17:K52:H18 (strain UMN026 / ExPEC).